We begin with the raw amino-acid sequence, 213 residues long: GTP cyclohydrolase 1 (213 aa).

The Zn(2+) site is built by Cys104, His107, and Cys175.

The protein belongs to the GTP cyclohydrolase I family. As to quaternary structure, homomer.

The catalysed reaction is GTP + H2O = 7,8-dihydroneopterin 3'-triphosphate + formate + H(+). It functions in the pathway cofactor biosynthesis; 7,8-dihydroneopterin triphosphate biosynthesis; 7,8-dihydroneopterin triphosphate from GTP: step 1/1. In Brucella canis (strain ATCC 23365 / NCTC 10854 / RM-666), this protein is GTP cyclohydrolase 1.